A 165-amino-acid polypeptide reads, in one-letter code: Crossover junction endodeoxyribonuclease RuvC (165 aa).

Residues D7, E67, and D140 contribute to the active site. Residues D7, E67, and D140 each coordinate Mg(2+).

This sequence belongs to the RuvC family. In terms of assembly, homodimer which binds Holliday junction (HJ) DNA. The HJ becomes 2-fold symmetrical on binding to RuvC with unstacked arms; it has a different conformation from HJ DNA in complex with RuvA. In the full resolvosome a probable DNA-RuvA(4)-RuvB(12)-RuvC(2) complex forms which resolves the HJ. The cofactor is Mg(2+).

It is found in the cytoplasm. The catalysed reaction is Endonucleolytic cleavage at a junction such as a reciprocal single-stranded crossover between two homologous DNA duplexes (Holliday junction).. Functionally, the RuvA-RuvB-RuvC complex processes Holliday junction (HJ) DNA during genetic recombination and DNA repair. Endonuclease that resolves HJ intermediates. Cleaves cruciform DNA by making single-stranded nicks across the HJ at symmetrical positions within the homologous arms, yielding a 5'-phosphate and a 3'-hydroxyl group; requires a central core of homology in the junction. The consensus cleavage sequence is 5'-(A/T)TT(C/G)-3'. Cleavage occurs on the 3'-side of the TT dinucleotide at the point of strand exchange. HJ branch migration catalyzed by RuvA-RuvB allows RuvC to scan DNA until it finds its consensus sequence, where it cleaves and resolves the cruciform DNA. The polypeptide is Crossover junction endodeoxyribonuclease RuvC (Dehalococcoides mccartyi (strain ATCC BAA-2266 / KCTC 15142 / 195) (Dehalococcoides ethenogenes (strain 195))).